We begin with the raw amino-acid sequence, 188 residues long: Transmembrane protein 160 (188 aa).

The transit peptide at 1–96 (MGGGWWWARA…ISFMQSDMGR (96 aa)) directs the protein to the mitochondrion. Residues 24–52 (PPQRPRSGGARGSFAPGHGPRAGASPPPV) form a disordered region. Ser48 carries the post-translational modification Phosphoserine. The next 2 membrane-spanning stretches (helical) occupy residues 102-122 (FFLL…VGLA) and 135-155 (AAVG…AVGL). The disordered stretch occupies residues 168 to 188 (PEDDGTASAEGPDEAGRPPPE).

It belongs to the TMEM160 family.

It is found in the mitochondrion inner membrane. This chain is Transmembrane protein 160, found in Homo sapiens (Human).